Reading from the N-terminus, the 352-residue chain is Uroporphyrinogen decarboxylase (352 aa).

Residues 26–30, Phe45, Asp76, Tyr153, Ser208, and His323 each bind substrate; that span reads RQAGR.

This sequence belongs to the uroporphyrinogen decarboxylase family. As to quaternary structure, homodimer.

The protein resides in the cytoplasm. The enzyme catalyses uroporphyrinogen III + 4 H(+) = coproporphyrinogen III + 4 CO2. The protein operates within porphyrin-containing compound metabolism; protoporphyrin-IX biosynthesis; coproporphyrinogen-III from 5-aminolevulinate: step 4/4. Its function is as follows. Catalyzes the decarboxylation of four acetate groups of uroporphyrinogen-III to yield coproporphyrinogen-III. This is Uroporphyrinogen decarboxylase from Parasynechococcus marenigrum (strain WH8102).